The chain runs to 348 residues: Hereditary hemochromatosis protein homolog (348 aa).

The signal sequence occupies residues 1–22; it reads MGPRARPALFFLILLRTVAAQG. The tract at residues 23–114 is alpha-1; it reads RPPRSHSLRY…IMDNHNHSKE (92 aa). Residues 23 to 306 lie on the Extracellular side of the membrane; the sequence is RPPRSHSLRY…WEPSLSNTLV (284 aa). Residues Asn110, Asn130, and Asn234 are each glycosylated (N-linked (GlcNAc...) asparagine). The tract at residues 115-205 is alpha-2; it reads SHTLQVILGC…ELGRGVLDQQ (91 aa). 2 disulfides stabilise this stretch: Cys124–Cys187 and Cys225–Cys282. The segment at 206-297 is alpha-3; it reads VPPLVKVTHH…GLDQPLTATW (92 aa). The region spanning 207 to 296 is the Ig-like C1-type domain; it reads PPLVKVTHHV…PGLDQPLTAT (90 aa). The tract at residues 298–306 is connecting peptide; sequence EPSLSNTLV. The chain crosses the membrane as a helical span at residues 307 to 330; the sequence is TGVISGIAVCVIIFLIGILFRILR. The Cytoplasmic segment spans residues 331–348; that stretch reads KRQASRGAMGDYVLAECE.

Belongs to the MHC class I family. As to quaternary structure, binds TFR through the extracellular domain in a pH-dependent manner.

It is found in the cell membrane. Functionally, binds to transferrin receptor (TFR) and reduces its affinity for iron-loaded transferrin. The sequence is that of Hereditary hemochromatosis protein homolog (HFE) from Dicerorhinus sumatrensis (Sumatran rhinoceros).